The following is a 305-amino-acid chain: Dihydroorotate dehydrogenase B (NAD(+)), catalytic subunit (305 aa).

FMN contacts are provided by residues Ser-23 and Lys-47–Gly-48. Substrate-binding positions include Lys-47 and Asn-71–Leu-75. The FMN site is built by Asn-101 and Asn-129. Asn-129 is a substrate binding site. Catalysis depends on Cys-132, which acts as the Nucleophile. FMN is bound by residues Lys-167 and Ile-193. Asn-194–Thr-195 is a binding site for substrate. FMN contacts are provided by residues Gly-219, Gly-245–Gly-246, and Gly-267–Thr-268.

This sequence belongs to the dihydroorotate dehydrogenase family. Type 1 subfamily. As to quaternary structure, heterotetramer of 2 PyrK and 2 PyrD type B subunits. FMN is required as a cofactor.

It is found in the cytoplasm. The enzyme catalyses (S)-dihydroorotate + NAD(+) = orotate + NADH + H(+). The protein operates within pyrimidine metabolism; UMP biosynthesis via de novo pathway; orotate from (S)-dihydroorotate (NAD(+) route): step 1/1. Its function is as follows. Catalyzes the conversion of dihydroorotate to orotate with NAD(+) as electron acceptor. The protein is Dihydroorotate dehydrogenase B (NAD(+)), catalytic subunit (pyrD) of Geobacter sp. (strain M21).